Consider the following 114-residue polypeptide: Large ribosomal subunit protein uL22 (114 aa).

It belongs to the universal ribosomal protein uL22 family. In terms of assembly, part of the 50S ribosomal subunit.

Its function is as follows. This protein binds specifically to 23S rRNA; its binding is stimulated by other ribosomal proteins, e.g. L4, L17, and L20. It is important during the early stages of 50S assembly. It makes multiple contacts with different domains of the 23S rRNA in the assembled 50S subunit and ribosome. Functionally, the globular domain of the protein is located near the polypeptide exit tunnel on the outside of the subunit, while an extended beta-hairpin is found that lines the wall of the exit tunnel in the center of the 70S ribosome. This is Large ribosomal subunit protein uL22 from Streptococcus pyogenes serotype M5 (strain Manfredo).